We begin with the raw amino-acid sequence, 382 residues long: SAT4 family membrane protein (382 aa).

The disordered stretch occupies residues 1-22 (MFGAELVGRETGGQSTDQPYSY). Residue Asn-78 is glycosylated (N-linked (GlcNAc...) asparagine). Transmembrane regions (helical) follow at residues 80-100 (SQIL…LLYL) and 112-132 (YLSI…NFFL). Asn-147 is a glycosylation site (N-linked (GlcNAc...) asparagine). 3 helical membrane-spanning segments follow: residues 159-179 (ILVT…LPII), 192-212 (LGIS…IMRL), and 228-248 (WYTE…PTFF). Asn-269 carries an N-linked (GlcNAc...) asparagine glycan.

Belongs to the SAT4 family.

It is found in the membrane. The sequence is that of SAT4 family membrane protein from Emericella nidulans (strain FGSC A4 / ATCC 38163 / CBS 112.46 / NRRL 194 / M139) (Aspergillus nidulans).